The following is a 130-amino-acid chain: UPF0225 protein CE1570 (130 aa).

This sequence belongs to the UPF0225 family.

This Corynebacterium efficiens (strain DSM 44549 / YS-314 / AJ 12310 / JCM 11189 / NBRC 100395) protein is UPF0225 protein CE1570.